Reading from the N-terminus, the 631-residue chain is 1-deoxy-D-xylulose-5-phosphate synthase (631 aa).

Thiamine diphosphate is bound by residues H87 and 128–130 (GHS). D159 contacts Mg(2+). Residues 160-161 (GA), N188, F295, and E377 contribute to the thiamine diphosphate site. N188 lines the Mg(2+) pocket.

Belongs to the transketolase family. DXPS subfamily. In terms of assembly, homodimer. It depends on Mg(2+) as a cofactor. Thiamine diphosphate is required as a cofactor.

The enzyme catalyses D-glyceraldehyde 3-phosphate + pyruvate + H(+) = 1-deoxy-D-xylulose 5-phosphate + CO2. The protein operates within metabolic intermediate biosynthesis; 1-deoxy-D-xylulose 5-phosphate biosynthesis; 1-deoxy-D-xylulose 5-phosphate from D-glyceraldehyde 3-phosphate and pyruvate: step 1/1. Catalyzes the acyloin condensation reaction between C atoms 2 and 3 of pyruvate and glyceraldehyde 3-phosphate to yield 1-deoxy-D-xylulose-5-phosphate (DXP). This is 1-deoxy-D-xylulose-5-phosphate synthase from Pseudomonas entomophila (strain L48).